Reading from the N-terminus, the 114-residue chain is Probable 4-amino-4-deoxy-L-arabinose-phosphoundecaprenol flippase subunit ArnE (114 aa).

The next 3 helical transmembrane spans lie at 41 to 61 (MWLW…LLVL), 64 to 84 (MDVG…TLVG), and 91 to 111 (PVDP…FQLG).

Belongs to the ArnE family. As to quaternary structure, heterodimer of ArnE and ArnF.

The protein resides in the cell inner membrane. It participates in bacterial outer membrane biogenesis; lipopolysaccharide biosynthesis. Functionally, translocates 4-amino-4-deoxy-L-arabinose-phosphoundecaprenol (alpha-L-Ara4N-phosphoundecaprenol) from the cytoplasmic to the periplasmic side of the inner membrane. The polypeptide is Probable 4-amino-4-deoxy-L-arabinose-phosphoundecaprenol flippase subunit ArnE (Pseudomonas savastanoi pv. phaseolicola (strain 1448A / Race 6) (Pseudomonas syringae pv. phaseolicola (strain 1448A / Race 6))).